A 203-amino-acid polypeptide reads, in one-letter code: MRLSLRHITWLKIAIWLAATLPLLWLVLSINLGGLSADPAKDIQHFTGRMALKLLLATLLVSPLARYSKQPLLLRCRRLLGLWCFAWGTLHLLSYSILELGLSNIGLLGHELINRPYLTLGIISWLVLLALALTSTRWAQRKMGARWQKLHNWVYVVAILAPIHYLWSVKTLSPWPIIYAVMAALLLLLRYKLLLPRYKKFRQ.

A run of 5 helical transmembrane segments spans residues 13-33 (IAIW…INLG), 79-99 (LLGL…SILE), 116-136 (PYLT…LTST), 147-167 (WQKL…HYLW), and 169-189 (VKTL…LLLL).

Belongs to the MsrQ family. In terms of assembly, heterodimer of a catalytic subunit (MsrP) and a heme-binding subunit (MsrQ). FMN is required as a cofactor. The cofactor is heme b.

It is found in the cell inner membrane. Functionally, part of the MsrPQ system that repairs oxidized periplasmic proteins containing methionine sulfoxide residues (Met-O), using respiratory chain electrons. Thus protects these proteins from oxidative-stress damage caused by reactive species of oxygen and chlorine generated by the host defense mechanisms. MsrPQ is essential for the maintenance of envelope integrity under bleach stress, rescuing a wide series of structurally unrelated periplasmic proteins from methionine oxidation. MsrQ provides electrons for reduction to the reductase catalytic subunit MsrP, using the quinone pool of the respiratory chain. In Yersinia pseudotuberculosis serotype O:1b (strain IP 31758), this protein is Protein-methionine-sulfoxide reductase heme-binding subunit MsrQ.